The following is a 239-amino-acid chain: Probable transcriptional regulatory protein BC_0539 (239 aa).

This sequence belongs to the TACO1 family. YeeN subfamily.

It localises to the cytoplasm. This chain is Probable transcriptional regulatory protein BC_0539, found in Bacillus cereus (strain ATCC 14579 / DSM 31 / CCUG 7414 / JCM 2152 / NBRC 15305 / NCIMB 9373 / NCTC 2599 / NRRL B-3711).